Here is a 247-residue protein sequence, read N- to C-terminus: Transcription factor bHLH92 (247 aa).

The bHLH domain occupies 85–134 (ERSRRHMLKERTRREKQKQSYLALHSLLPFATKNDKNSIVEKAVDEIAKL).

In terms of assembly, homodimer.

The protein resides in the nucleus. The sequence is that of Transcription factor bHLH92 (BHLH92) from Arabidopsis thaliana (Mouse-ear cress).